A 498-amino-acid chain; its full sequence is POTE ankyrin domain family member A (498 aa).

ANK repeat units follow at residues 98-127 (KKRT…QLHV), 131-160 (KKRT…DPNL), 164-193 (YGNT…DIES), 197-226 (GGLT…NLNA), and 230-259 (FGRT…DVFS). Positions 289–410 (NQMPNNSSGN…SNEKNKVKSQ (122 aa)) are disordered. Residues 290 to 302 (QMPNNSSGNSNPE) are compositionally biased toward polar residues. The segment covering 303 to 338 (QDLKLTSEEEPQRLKGSENSQHEKVTQEPDINKDCD) has biased composition (basic and acidic residues). Positions 348–359 (HGSNNVGLSENL) are enriched in polar residues. The segment covering 392 to 406 (EEYHRPEKKSNEKNK) has biased composition (basic and acidic residues). Residues 469–497 (EHLLELKNSHYEQLTVEVEQMENMVHVLQ) adopt a coiled-coil conformation.

It belongs to the POTE family.

The sequence is that of POTE ankyrin domain family member A (POTEA) from Homo sapiens (Human).